The sequence spans 194 residues: Large ribosomal subunit protein bL25 (194 aa).

It belongs to the bacterial ribosomal protein bL25 family. CTC subfamily. As to quaternary structure, part of the 50S ribosomal subunit; part of the 5S rRNA/L5/L18/L25 subcomplex. Contacts the 5S rRNA. Binds to the 5S rRNA independently of L5 and L18.

Its function is as follows. This is one of the proteins that binds to the 5S RNA in the ribosome where it forms part of the central protuberance. This Geobacter sulfurreducens (strain ATCC 51573 / DSM 12127 / PCA) protein is Large ribosomal subunit protein bL25.